The chain runs to 379 residues: Chaperone protein DnaJ (379 aa).

A J domain is found at 4–69 (DLYETLGVKK…QKRAAYDRYG (66 aa)). A CR-type zinc finger spans residues 137 to 215 (GKTAQIRVPT…CHGQGRVTEE (79 aa)). Zn(2+)-binding residues include C150, C153, C167, C170, C189, C192, C203, and C206. CXXCXGXG motif repeat units lie at residues 150-157 (CDVCTGSG), 167-174 (CATCQGSG), 189-196 (CPTCGGRG), and 203-210 (CTKCHGQG).

The protein belongs to the DnaJ family. Homodimer. Zn(2+) is required as a cofactor.

The protein localises to the cytoplasm. Participates actively in the response to hyperosmotic and heat shock by preventing the aggregation of stress-denatured proteins and by disaggregating proteins, also in an autonomous, DnaK-independent fashion. Unfolded proteins bind initially to DnaJ; upon interaction with the DnaJ-bound protein, DnaK hydrolyzes its bound ATP, resulting in the formation of a stable complex. GrpE releases ADP from DnaK; ATP binding to DnaK triggers the release of the substrate protein, thus completing the reaction cycle. Several rounds of ATP-dependent interactions between DnaJ, DnaK and GrpE are required for fully efficient folding. Also involved, together with DnaK and GrpE, in the DNA replication of plasmids through activation of initiation proteins. This is Chaperone protein DnaJ from Sinorhizobium fredii (strain NBRC 101917 / NGR234).